A 321-amino-acid polypeptide reads, in one-letter code: MAVYTDIAEDDLKWFLTEYDAGTLLSYKGIAEGVENSNFLLHTSKDPLILTLYEKRVEKSDLPFFLGLMQHLSARGLSCPLPLPRRDGALLGSLSGRPAALISFLEGMWLRKPEAKHCREVGRALAEMHVAGDGFALKRPNALSIDGWRGLWEKSEARAGEVEPGLRDEIRSELDFLSAAWPSGLPAGVIHADLFPDNVFFLGDQLSGLIDFYFACNDLLAYDVSICLNAWCFEKDGAYNITKGTAMLEGYQSVRPLSDAEISALPVLSRGSALRFFLTRLYDWLTTPEGAMVTKKDPLEYLRKLRFHRQIKSPAEYGLSL.

This sequence belongs to the pseudomonas-type ThrB family.

The catalysed reaction is L-homoserine + ATP = O-phospho-L-homoserine + ADP + H(+). The protein operates within amino-acid biosynthesis; L-threonine biosynthesis; L-threonine from L-aspartate: step 4/5. This is Homoserine kinase from Rhizobium johnstonii (strain DSM 114642 / LMG 32736 / 3841) (Rhizobium leguminosarum bv. viciae).